Here is a 474-residue protein sequence, read N- to C-terminus: MTKEDWEAVIGLEVHAQVSSNTKLFSSSSTEFGAEHNTQVSLVDAAMPGTLPILNYYCIEQAIRTGLALSAEINKYSYFDRKNYFYPDLPQGYQITQFFEPIVKNGRVFINDNEKEIRIARIHLEQDAGKSVHEESKTYVDLNRAGVALMEIVSEPDLRSSAEAAECMKKLRQILRYIGSCDGDMEKGSLRCDANVSVRLKGSSTFGTRCEIKNLNSIRYIVQAIDYEIQRQIEILESGEEISQDTLLFDVASGKTKVMRSKEDASDYRYFPEPDLLPVEVSQDKIDLIQSSLPELPDQKKLRYIEELGINEYDANVITSDKAIADYFEELIKKHDSKLAVTWLTVELFGRLNKAGIDIVSSPIKANALSELLDFIVDGTISAKLGKQVFDSMFETGKPASLIIEEQGLKQITDRGQISEVIDKIINNNQDKVQEYKSGKTKLYGFFVGEVMKLTKGKASPDVVNSILSERLSN.

Belongs to the GatB/GatE family. GatB subfamily. In terms of assembly, heterotrimer of A, B and C subunits.

It carries out the reaction L-glutamyl-tRNA(Gln) + L-glutamine + ATP + H2O = L-glutaminyl-tRNA(Gln) + L-glutamate + ADP + phosphate + H(+). The enzyme catalyses L-aspartyl-tRNA(Asn) + L-glutamine + ATP + H2O = L-asparaginyl-tRNA(Asn) + L-glutamate + ADP + phosphate + 2 H(+). Functionally, allows the formation of correctly charged Asn-tRNA(Asn) or Gln-tRNA(Gln) through the transamidation of misacylated Asp-tRNA(Asn) or Glu-tRNA(Gln) in organisms which lack either or both of asparaginyl-tRNA or glutaminyl-tRNA synthetases. The reaction takes place in the presence of glutamine and ATP through an activated phospho-Asp-tRNA(Asn) or phospho-Glu-tRNA(Gln). In Wolbachia pipientis wMel, this protein is Aspartyl/glutamyl-tRNA(Asn/Gln) amidotransferase subunit B.